Reading from the N-terminus, the 256-residue chain is 14-3-3-like protein GF14-C (256 aa).

It belongs to the 14-3-3 family. In terms of assembly, may form a complex with the transcriptional activator VP1 and the bZIP transcription factor EMBP1. As to expression, expressed in seedlings, internodes and panicles.

The protein localises to the cytoplasm. It localises to the nucleus. Functionally, is associated with a DNA binding complex that binds to the G box, a well-characterized cis-acting DNA regulatory element found in plant genes. The chain is 14-3-3-like protein GF14-C (GF14C) from Oryza sativa subsp. japonica (Rice).